The primary structure comprises 441 residues: Methylenetetrahydrofolate--tRNA-(uracil-5-)-methyltransferase TrmFO (441 aa).

7-12 (GAGLSG) provides a ligand contact to FAD.

The protein belongs to the MnmG family. TrmFO subfamily. FAD is required as a cofactor.

The protein resides in the cytoplasm. It catalyses the reaction uridine(54) in tRNA + (6R)-5,10-methylene-5,6,7,8-tetrahydrofolate + NADH + H(+) = 5-methyluridine(54) in tRNA + (6S)-5,6,7,8-tetrahydrofolate + NAD(+). The catalysed reaction is uridine(54) in tRNA + (6R)-5,10-methylene-5,6,7,8-tetrahydrofolate + NADPH + H(+) = 5-methyluridine(54) in tRNA + (6S)-5,6,7,8-tetrahydrofolate + NADP(+). Catalyzes the folate-dependent formation of 5-methyl-uridine at position 54 (M-5-U54) in all tRNAs. This Pseudothermotoga lettingae (strain ATCC BAA-301 / DSM 14385 / NBRC 107922 / TMO) (Thermotoga lettingae) protein is Methylenetetrahydrofolate--tRNA-(uracil-5-)-methyltransferase TrmFO.